Reading from the N-terminus, the 492-residue chain is Peptidyl-prolyl cis-trans isomerase-like 4 (492 aa).

A PPIase cyclophilin-type domain is found at 1 to 161; sequence MAVLLETTLG…QDIRINHTVI (161 aa). Residues 167 to 188 form a disordered region; the sequence is DDPPDLLIPDRSPEPTKEQLDS. A compositionally biased stretch (basic and acidic residues) spans 177–187; the sequence is RSPEPTKEQLD. Serine 178 carries the phosphoserine modification. The residue at position 182 (threonine 182) is a Phosphothreonine. Residues lysine 201, lysine 212, and lysine 218 each participate in a glycyl lysine isopeptide (Lys-Gly) (interchain with G-Cter in SUMO2) cross-link. Residues 240–318 form the RRM domain; it reads NVLFVCKLNP…RRIHVDFSQS (79 aa). Glycyl lysine isopeptide (Lys-Gly) (interchain with G-Cter in SUMO2) cross-links involve residues lysine 321 and lysine 362. Disordered stretches follow at residues 368–409 and 423–492; these read DEQG…NPNQ and EESC…SKYR. Basic residues predominate over residues 377-390; the sequence is SHSHTSKKHKKKTR. The residue at position 393 (serine 393) is a Phosphoserine. Residue lysine 405 forms a Glycyl lysine isopeptide (Lys-Gly) (interchain with G-Cter in SUMO2) linkage. The segment covering 426 to 436 has biased composition (basic and acidic residues); sequence CWEKQKNEKRD. Lysine 460 participates in a covalent cross-link: Glycyl lysine isopeptide (Lys-Gly) (interchain with G-Cter in SUMO2). Serine 471 is subject to Phosphoserine. Residues 473–485 show a composition bias toward basic residues; the sequence is KRDRSRSPKKSKA.

This sequence belongs to the cyclophilin-type PPIase family. PPIL4 subfamily.

It localises to the nucleus. It carries out the reaction [protein]-peptidylproline (omega=180) = [protein]-peptidylproline (omega=0). In terms of biological role, PPIases accelerate the folding of proteins. It catalyzes the cis-trans isomerization of proline imidic peptide bonds in oligopeptides. This Mus musculus (Mouse) protein is Peptidyl-prolyl cis-trans isomerase-like 4 (Ppil4).